The primary structure comprises 255 residues: 5-oxoprolinase subunit A (255 aa).

It belongs to the LamB/PxpA family. In terms of assembly, forms a complex composed of PxpA, PxpB and PxpC.

The catalysed reaction is 5-oxo-L-proline + ATP + 2 H2O = L-glutamate + ADP + phosphate + H(+). Catalyzes the cleavage of 5-oxoproline to form L-glutamate coupled to the hydrolysis of ATP to ADP and inorganic phosphate. This Clostridium beijerinckii (strain ATCC 51743 / NCIMB 8052) (Clostridium acetobutylicum) protein is 5-oxoprolinase subunit A.